The chain runs to 478 residues: MAEQEKEATLPSKENFSEWYNGMLQIAEIMDVRYPVKGSYVWYPFGFSIRRNVYDIIRGLLDKDHQETLFPLLIPENEFMKEAEHIKGFEEEVYWVLNGGTTPLDVKLALRPTSETAIYPMYRLWVRSHADLPLKLYQIVNTFRYETKHTRPLIRLREITSFKEAHTVHATWDEAASQVEEAIRLYIEFYKRLAIPVLPSKRPSWDKFPGADYTIAVDSLMPDGKTLQVGTAHHLGDNFAKTFDIKYEDVDGEQVYAHQTCYGVSERCIATLLSTHGDDKGLVLPPEVAPTQVVIIPIIFKEPEAVLNACNDVKAELEAAGVRVTIDDSDKRPGSKYYKWEMKGVPLRIEIGPRDLKNEAAMLARRDTGEKEQVPLASIKDEVLSRFKIIQTSLLEKATSELNERIFDCSTVDDVKEKVQDGIALVPWCGEEKCGLDLDEQVGAGILGIPTDMDEDGTYKCPICSKETRTRVYVARTY.

The protein belongs to the class-II aminoacyl-tRNA synthetase family. ProS type 3 subfamily. As to quaternary structure, homodimer.

It localises to the cytoplasm. It catalyses the reaction tRNA(Pro) + L-proline + ATP = L-prolyl-tRNA(Pro) + AMP + diphosphate. Functionally, catalyzes the attachment of proline to tRNA(Pro) in a two-step reaction: proline is first activated by ATP to form Pro-AMP and then transferred to the acceptor end of tRNA(Pro). This Methanococcoides burtonii (strain DSM 6242 / NBRC 107633 / OCM 468 / ACE-M) protein is Proline--tRNA ligase.